Reading from the N-terminus, the 92-residue chain is RNA-binding protein Hfq (92 aa).

The Sm domain occupies 9 to 68 (DPFLNALRRERVPVSIYLVNGIKLQGQVESFDQFVILLKNTVSQMVYKHAISTVVPSRPF).

This sequence belongs to the Hfq family. Homohexamer.

RNA chaperone that binds small regulatory RNA (sRNAs) and mRNAs to facilitate mRNA translational regulation in response to envelope stress, environmental stress and changes in metabolite concentrations. Also binds with high specificity to tRNAs. This Shewanella piezotolerans (strain WP3 / JCM 13877) protein is RNA-binding protein Hfq.